Consider the following 684-residue polypeptide: Methionine--tRNA ligase (684 aa).

The 'HIGH' region motif lies at 12–22; the sequence is PYANGSIHLGH. Zn(2+) is bound by residues Cys-143, Cys-146, Cys-156, and Cys-159. The 'KMSKS' region signature appears at 339 to 343; that stretch reads KMSKS. Lys-342 is a binding site for ATP. A tRNA-binding domain is found at 581–684; sequence DFMKIDMRVA…AGAQPGDKVG (104 aa).

Belongs to the class-I aminoacyl-tRNA synthetase family. MetG type 1 subfamily. In terms of assembly, homodimer. The cofactor is Zn(2+).

The protein resides in the cytoplasm. The enzyme catalyses tRNA(Met) + L-methionine + ATP = L-methionyl-tRNA(Met) + AMP + diphosphate. Is required not only for elongation of protein synthesis but also for the initiation of all mRNA translation through initiator tRNA(fMet) aminoacylation. The sequence is that of Methionine--tRNA ligase from Neisseria gonorrhoeae (strain ATCC 700825 / FA 1090).